The sequence spans 700 residues: Putative ankyrin repeat protein FPV018 (700 aa).

ANK repeat units follow at residues 29-59 (DRLLSLHNILKENNVDRLRELIESDKDVINM), 63-92 (NRLLPLHIAIEHSDIEIVEMLLDNNAVING), 126-155 (RIRRLLTVNNTEKYTKIVKLLIKHGADLKM), 204-233 (MRRITIKCAIRAVNIELVKHFISNNLLADT), 236-265 (ALEDYFLEAVKTNSPKMVKLFLDSGIDINS), 270-299 (NSHTALYHAVEQENVTLVMLLLNHGADPDI), 301-332 (DIYSMLKYAIMSSKHGVKLFNILVKNGARIRC), 395-424 (CNMYPIHAAVSINTSRLTRLLINKGADVNV), 428-457 (YGKTPIHLACMYSKIGNIKVLIKNGANVNE), 461-490 (YGITPLMICSREGKVSNMEYLLANGADVNQ), and 494-523 (DKNTALTYAIRNKSKECTRVLLEHGADMCF).

This chain is Putative ankyrin repeat protein FPV018, found in Fowlpox virus (strain NVSL) (FPV).